The chain runs to 420 residues: Light-independent protochlorophyllide reductase subunit N (420 aa).

[4Fe-4S] cluster is bound by residues Cys-21, Cys-46, and Cys-103.

Belongs to the BchN/ChlN family. As to quaternary structure, protochlorophyllide reductase is composed of three subunits; BchL, BchN and BchB. Forms a heterotetramer of two BchB and two BchN subunits. It depends on [4Fe-4S] cluster as a cofactor.

It catalyses the reaction chlorophyllide a + oxidized 2[4Fe-4S]-[ferredoxin] + 2 ADP + 2 phosphate = protochlorophyllide a + reduced 2[4Fe-4S]-[ferredoxin] + 2 ATP + 2 H2O. It participates in porphyrin-containing compound metabolism; bacteriochlorophyll biosynthesis (light-independent). Its function is as follows. Component of the dark-operative protochlorophyllide reductase (DPOR) that uses Mg-ATP and reduced ferredoxin to reduce ring D of protochlorophyllide (Pchlide) to form chlorophyllide a (Chlide). This reaction is light-independent. The NB-protein (BchN-BchB) is the catalytic component of the complex. This Chlorobium luteolum (strain DSM 273 / BCRC 81028 / 2530) (Pelodictyon luteolum) protein is Light-independent protochlorophyllide reductase subunit N.